Reading from the N-terminus, the 455-residue chain is Bifunctional protein GlmU (455 aa).

Residues 1-226 form a pyrophosphorylase region; sequence MGLSVVILAA…EFEILGVNDR (226 aa). Residues 8 to 11, lysine 22, glutamine 73, 78 to 79, 99 to 101, glycine 136, glutamate 151, asparagine 166, and asparagine 224 each bind UDP-N-acetyl-alpha-D-glucosamine; these read LAAG, GT, and YGD. A Mg(2+)-binding site is contributed by aspartate 101. Residue asparagine 224 coordinates Mg(2+). Residues 227 to 247 are linker; it reads TQLASLERVWQRNVAEKIMAK. Residues 248–455 are N-acetyltransferase; it reads GVSIADPNRF…WQRSVKKTDK (208 aa). Positions 330 and 348 each coordinate UDP-N-acetyl-alpha-D-glucosamine. Histidine 360 serves as the catalytic Proton acceptor. Residues tyrosine 363 and asparagine 374 each contribute to the UDP-N-acetyl-alpha-D-glucosamine site. Residues alanine 377, 383–384, serine 402, alanine 420, and arginine 437 contribute to the acetyl-CoA site; that span reads NY.

The protein in the N-terminal section; belongs to the N-acetylglucosamine-1-phosphate uridyltransferase family. This sequence in the C-terminal section; belongs to the transferase hexapeptide repeat family. As to quaternary structure, homotrimer. Mg(2+) is required as a cofactor.

It localises to the cytoplasm. It catalyses the reaction alpha-D-glucosamine 1-phosphate + acetyl-CoA = N-acetyl-alpha-D-glucosamine 1-phosphate + CoA + H(+). The catalysed reaction is N-acetyl-alpha-D-glucosamine 1-phosphate + UTP + H(+) = UDP-N-acetyl-alpha-D-glucosamine + diphosphate. Its pathway is nucleotide-sugar biosynthesis; UDP-N-acetyl-alpha-D-glucosamine biosynthesis; N-acetyl-alpha-D-glucosamine 1-phosphate from alpha-D-glucosamine 6-phosphate (route II): step 2/2. The protein operates within nucleotide-sugar biosynthesis; UDP-N-acetyl-alpha-D-glucosamine biosynthesis; UDP-N-acetyl-alpha-D-glucosamine from N-acetyl-alpha-D-glucosamine 1-phosphate: step 1/1. It participates in bacterial outer membrane biogenesis; LPS lipid A biosynthesis. In terms of biological role, catalyzes the last two sequential reactions in the de novo biosynthetic pathway for UDP-N-acetylglucosamine (UDP-GlcNAc). The C-terminal domain catalyzes the transfer of acetyl group from acetyl coenzyme A to glucosamine-1-phosphate (GlcN-1-P) to produce N-acetylglucosamine-1-phosphate (GlcNAc-1-P), which is converted into UDP-GlcNAc by the transfer of uridine 5-monophosphate (from uridine 5-triphosphate), a reaction catalyzed by the N-terminal domain. The sequence is that of Bifunctional protein GlmU from Francisella tularensis subsp. tularensis (strain FSC 198).